Consider the following 412-residue polypeptide: cAMP-dependent protein kinase regulatory subunit (412 aa).

A dimerization and phosphorylation region spans residues 1–142 (MSFEEVYEEL…RLKRSVAGNF (142 aa)). The Pseudophosphorylation motif motif lies at 101 to 105 (RRQSV). At serine 104 the chain carries Phosphoserine. 3',5'-cyclic AMP contacts are provided by residues 143 to 277 (LFKN…EEVP), glutamate 224, arginine 233, 278 to 412 (ILSS…STKA), glutamate 344, and arginine 353. Residues 392-412 (MGMDNEYGDQSLHRSPPSTKA) form a disordered region.

It belongs to the cAMP-dependent kinase regulatory chain family. As to quaternary structure, tetramer, composed of 2 regulatory (R) and 2 catalytic (C) subunits. In the presence of cAMP it dissociates into 2 active monomeric C subunits and an R dimer.

The sequence is that of cAMP-dependent protein kinase regulatory subunit (cgs1) from Schizosaccharomyces pombe (strain 972 / ATCC 24843) (Fission yeast).